The chain runs to 689 residues: Glycine--tRNA ligase beta subunit (689 aa).

It belongs to the class-II aminoacyl-tRNA synthetase family. Tetramer of two alpha and two beta subunits.

It localises to the cytoplasm. It carries out the reaction tRNA(Gly) + glycine + ATP = glycyl-tRNA(Gly) + AMP + diphosphate. The chain is Glycine--tRNA ligase beta subunit from Shewanella halifaxensis (strain HAW-EB4).